The sequence spans 116 residues: UPF0102 protein LA_2381 (116 aa).

Belongs to the UPF0102 family.

The protein is UPF0102 protein LA_2381 of Leptospira interrogans serogroup Icterohaemorrhagiae serovar Lai (strain 56601).